Consider the following 1204-residue polypeptide: Integrator complex subunit 2 (1204 aa).

Residues 428–444 (FVSLSFCMLLAFSTLVS) form a helical membrane-spanning segment.

Belongs to the Integrator subunit 2 family. Component of the Integrator complex, composed of core subunits INTS1, INTS2, INTS3, INTS4, INTS5, INTS6, INTS7, INTS8, INTS9/RC74, INTS10, INTS11/CPSF3L, INTS12, INTS13, INTS14 and INTS15. The core complex associates with protein phosphatase 2A subunits PPP2CA and PPP2R1A, to form the Integrator-PP2A (INTAC) complex.

It localises to the nucleus. It is found in the nucleus membrane. Its subcellular location is the cytoplasm. Component of the integrator complex, a multiprotein complex that terminates RNA polymerase II (Pol II) transcription in the promoter-proximal region of genes. The integrator complex provides a quality checkpoint during transcription elongation by driving premature transcription termination of transcripts that are unfavorably configured for transcriptional elongation: the complex terminates transcription by (1) catalyzing dephosphorylation of the C-terminal domain (CTD) of Pol II subunit POLR2A/RPB1 and SUPT5H/SPT5, (2) degrading the exiting nascent RNA transcript via endonuclease activity and (3) promoting the release of Pol II from bound DNA. The integrator complex is also involved in terminating the synthesis of non-coding Pol II transcripts, such as enhancer RNAs (eRNAs), small nuclear RNAs (snRNAs), telomerase RNAs and long non-coding RNAs (lncRNAs). Mediates recruitment of cytoplasmic dynein to the nuclear envelope, probably as component of the integrator complex. In Homo sapiens (Human), this protein is Integrator complex subunit 2.